Reading from the N-terminus, the 226-residue chain is Acyl-protein thioesterase 1 homolog 1 (226 aa).

Active-site charge relay system residues include S121, D174, and H206.

It belongs to the AB hydrolase superfamily. AB hydrolase 2 family.

It is found in the cytoplasm. Its subcellular location is the nucleus. The enzyme catalyses S-hexadecanoyl-L-cysteinyl-[protein] + H2O = L-cysteinyl-[protein] + hexadecanoate + H(+). In terms of biological role, hydrolyzes fatty acids from S-acylated cysteine residues in proteins with a strong preference for palmitoylated G-alpha proteins over other acyl substrates. Mediates the deacylation of G-alpha proteins such as GPA1 in vivo, but has weak or no activity toward palmitoylated Ras proteins. Has weak lysophospholipase activity in vitro; however such activity may not exist in vivo. The chain is Acyl-protein thioesterase 1 homolog 1 from Dictyostelium discoideum (Social amoeba).